The chain runs to 87 residues: UPF0250 protein YbeD (87 aa).

It belongs to the UPF0250 family.

This is UPF0250 protein YbeD from Shigella boydii serotype 18 (strain CDC 3083-94 / BS512).